The following is a 127-amino-acid chain: Large ribosomal subunit protein bL19 (127 aa).

This sequence belongs to the bacterial ribosomal protein bL19 family.

In terms of biological role, this protein is located at the 30S-50S ribosomal subunit interface and may play a role in the structure and function of the aminoacyl-tRNA binding site. This is Large ribosomal subunit protein bL19 from Jannaschia sp. (strain CCS1).